The chain runs to 826 residues: MTAIVGFDQLSKALIDAGTNLLSPPSSTDDLLTLLDETESLLKNVEQDQPLSMQSALIPSRNALVSVDLLSHPDSDVRVSVVSCLTEIVRITAPETPYSDDLMKEIFRLTIEAFEKLADASSRSYKKAEFVLDNVAKVKSCLVMLDLECYDLILQMFRNFFKFIRSDHPQLVFSSMELIMIAIIDETEQVSTDLLDSLLATVKKENQNVSPMSWSLAEKVLSRCARKLKPYIIEALKSRGTSLDMYSPVVSSICQSVFNTPKVHSPVNTKEHEEKLDLGHSRKENLSKSSSKRPARHETRGINEKEKVRNGNKSSLLKQSLKQVRSESTDAEITGKRGRKPNSLMNPEDYDISWLSGKRDPLKTSSNKKIQKKGSGGVSSLGKVPAKKTPLPKENSPATSSRSLTGSLKRSRVKMDESDYDSDSLSSPRLKKLASCFRDEEPNQEDDRKIGNSSKQTRSKNGLEKSQKTAKKKPVVEAKIVNSSGKRLSARSVAKRRNLERAPLDTLVPQSSKRKKMVSQVAARQLANESEEETPKSHPTRRRTVRKEVESDGFGEDLVGKRVNIWWPLDKTFYEGVIDSYCTRKKMHRVIYSDGDSEELNLTEERWELLEDDTSADEDKEIDLPESIPLSDIMQRQKVKKSKNVAVSVEPTSSSGVRSSSRTLMKKDCGKRLNKQVEKTREGKNLRSLKELNAETDRTAEEQEVSLEAESDDRSEEQEYEDDCSDKKEQSQDKGVEAETKEEEKQYPNSEGESEGEDSESEEEPKWRETDDMEDDEEEEEEEIDHMEDEAEEEKEEVDDKEASANMSEIEKEEEEEEEDEEKRKS.

HEAT repeat units lie at residues 18 to 54 (GTNL…LSMQ), 55 to 94 (SALI…ITAP), 151 to 188 (DLIL…DETE), 189 to 226 (QVST…RCAR), and 230 to 267 (PYII…HSPV). Disordered regions lie at residues 261–551 (PKVH…EVES) and 640–826 (KKSK…KRKS). Composition is skewed to basic and acidic residues over residues 269 to 286 (TKEH…KENL) and 296 to 309 (RHET…EKVR). Positions 281–288 (SRKENLSK) match the Nuclear localization signal 1 motif. Residues 311 to 323 (GNKSSLLKQSLKQ) are compositionally biased toward polar residues. Positions 357–364 (GKRDPLKT) match the Nuclear localization signal 2 motif. Over residues 396-408 (SPATSSRSLTGSL) the composition is skewed to polar residues. Residues 424 to 461 (SLSSPRLKKLASCFRDEEPNQEDDRKIGNSSKQTRSKN) form an HEAT 6 repeat. A compositionally biased stretch (basic and acidic residues) spans 437 to 450 (FRDEEPNQEDDRKI). A compositionally biased stretch (polar residues) spans 451–460 (GNSSKQTRSK). Residues 644-663 (NVAVSVEPTSSSGVRSSSRT) are compositionally biased toward low complexity. Basic and acidic residues predominate over residues 665-701 (MKKDCGKRLNKQVEKTREGKNLRSLKELNAETDRTAE). Positions 702–724 (EQEVSLEAESDDRSEEQEYEDDC) are enriched in acidic residues. Over residues 725-746 (SDKKEQSQDKGVEAETKEEEKQ) the composition is skewed to basic and acidic residues. Acidic residues-rich tracts occupy residues 752-763 (GESEGEDSESEE), 771-800 (DDME…EVDD), and 811-826 (EKEE…KRKS). Residues 770–825 (TDDMEDDEEEEEEEIDHMEDEAEEEKEEVDDKEASANMSEIEKEEEEEEEDEEKRK) are a coiled coil.

This sequence belongs to the PDS5 family. As to quaternary structure, interacts with the cohesin complex.

It localises to the nucleus. In terms of biological role, cohesin cofactor dispensable during the meiotic division but playing an important role in DNA repair by homologous recombination (HR) probably by helping SMC5/SMC6 complex. Regulator of sister chromatid cohesion in mitosis which may stabilize cohesin complex association with chromatin. May couple sister chromatid cohesion during mitosis to DNA replication. Cohesion ensures that chromosome partitioning is accurate in both meiotic and mitotic cells and plays an important role in DNA repair. The polypeptide is Sister chromatid cohesion protein PDS5 homolog D (Arabidopsis thaliana (Mouse-ear cress)).